A 93-amino-acid polypeptide reads, in one-letter code: Protein Tat (93 aa).

Residues 1-24 (MEPVDPELEPWNHPGSQPKTACNN) are interaction with human CREBBP. Residues 1-48 (MEPVDPELEPWNHPGSQPKTACNNCHCKVCCYHCVYCFTKKGLGISYG) form a transactivation region. Cysteine 22, cysteine 25, and cysteine 27 together coordinate Zn(2+). Residues 22–37 (CNNCHCKVCCYHCVYC) are cysteine-rich. N6-acetyllysine; by host PCAF is present on lysine 28. Residues cysteine 30, histidine 33, cysteine 34, and cysteine 37 each coordinate Zn(2+). The tract at residues 38–48 (FTKKGLGISYG) is core. Over residues 48 to 58 (GRKKRSQRRRT) the composition is skewed to basic residues. Positions 48 to 93 (GRKKRSQRRRTPQSNKSHQDPLPKQPLSQRLGDQTGQKEQKKTLES) are disordered. A Nuclear localization signal, RNA-binding (TAR), and protein transduction motif is present at residues 49–57 (RKKRSQRRR). An interaction with the host capping enzyme RNGTT region spans residues 49-86 (RKKRSQRRRTPQSNKSHQDPLPKQPLSQRLGDQTGQKE). N6-acetyllysine; by host EP300 and GCN5L2 occurs at positions 50 and 51. At arginine 52 the chain carries Asymmetric dimethylarginine; by host PRMT6. Lysine 71 is covalently cross-linked (Glycyl lysine isopeptide (Lys-Gly) (interchain with G-Cter in ubiquitin)). The span at 73 to 82 (PLSQRLGDQT) shows a compositional bias: polar residues. Residues 83–93 (GQKEQKKTLES) are compositionally biased toward basic and acidic residues.

This sequence belongs to the lentiviruses Tat family. In terms of assembly, interacts with host CCNT1. Associates with the P-TEFb complex composed at least of Tat, P-TEFb (CDK9 and CCNT1), TAR RNA, RNA Pol II. Recruits the HATs CREBBP, TAF1/TFIID, EP300, PCAF and GCN5L2. Interacts with host KAT5/Tip60; this interaction targets the latter to degradation. Interacts with the host deacetylase SIRT1. Interacts with host capping enzyme RNGTT; this interaction stimulates RNGTT. Binds to host KDR, and to the host integrins ITGAV/ITGB3 and ITGA5/ITGB1. Interacts with host KPNB1/importin beta-1 without previous binding to KPNA1/importin alpha-1. Interacts with EIF2AK2. Interacts with host nucleosome assembly protein NAP1L1; this interaction may be required for the transport of Tat within the nucleus, since the two proteins interact at the nuclear rim. Interacts with host C1QBP/SF2P32; this interaction involves lysine-acetylated Tat. Interacts with the host chemokine receptors CCR2, CCR3 and CXCR4. Interacts with host DPP4/CD26; this interaction may trigger an anti-proliferative effect. Interacts with host LDLR. Interacts with the host extracellular matrix metalloproteinase MMP1. Interacts with host PRMT6; this interaction mediates Tat's methylation. Interacts with, and is ubiquitinated by MDM2/Hdm2. Interacts with host PSMC3 and HTATIP2. Interacts with STAB1; this interaction may overcome SATB1-mediated repression of IL2 and IL2RA (interleukin) in T cells by binding to the same domain than HDAC1. Interacts (when acetylated) with human CDK13, thereby increasing HIV-1 mRNA splicing and promoting the production of the doubly spliced HIV-1 protein Nef. Interacts with host TBP; this interaction modulates the activity of transcriptional pre-initiation complex. Interacts with host RELA. In terms of processing, asymmetrical arginine methylation by host PRMT6 seems to diminish the transactivation capacity of Tat and affects the interaction with host CCNT1. Post-translationally, acetylation by EP300, CREBBP, GCN5L2/GCN5 and PCAF regulates the transactivation activity of Tat. EP300-mediated acetylation of Lys-50 promotes dissociation of Tat from the TAR RNA through the competitive binding to PCAF's bromodomain. In addition, the non-acetylated Tat's N-terminus can also interact with PCAF. PCAF-mediated acetylation of Lys-28 enhances Tat's binding to CCNT1. Lys-50 is deacetylated by SIRT1. Polyubiquitination by host MDM2 does not target Tat to degradation, but activates its transactivation function and fosters interaction with CCNT1 and TAR RNA. In terms of processing, phosphorylated by EIF2AK2 on serine and threonine residues adjacent to the basic region important for TAR RNA binding and function. Phosphorylation of Tat by EIF2AK2 is dependent on the prior activation of EIF2AK2 by dsRNA.

Its subcellular location is the host nucleus. It is found in the host nucleolus. It localises to the host cytoplasm. The protein resides in the secreted. In terms of biological role, transcriptional activator that increases RNA Pol II processivity, thereby increasing the level of full-length viral transcripts. Recognizes a hairpin structure at the 5'-LTR of the nascent viral mRNAs referred to as the transactivation responsive RNA element (TAR) and recruits the cyclin T1-CDK9 complex (P-TEFb complex) that will in turn hyperphosphorylate the RNA polymerase II to allow efficient elongation. The CDK9 component of P-TEFb and other Tat-activated kinases hyperphosphorylate the C-terminus of RNA Pol II that becomes stabilized and much more processive. Other factors such as HTATSF1/Tat-SF1, SUPT5H/SPT5, and HTATIP2 are also important for Tat's function. Besides its effect on RNA Pol II processivity, Tat induces chromatin remodeling of proviral genes by recruiting the histone acetyltransferases (HATs) CREBBP, EP300 and PCAF to the chromatin. This also contributes to the increase in proviral transcription rate, especially when the provirus integrates in transcriptionally silent region of the host genome. To ensure maximal activation of the LTR, Tat mediates nuclear translocation of NF-kappa-B by interacting with host RELA. Through its interaction with host TBP, Tat may also modulate transcription initiation. Tat can reactivate a latently infected cell by penetrating in it and transactivating its LTR promoter. In the cytoplasm, Tat is thought to act as a translational activator of HIV-1 mRNAs. Functionally, extracellular circulating Tat can be endocytosed by surrounding uninfected cells via the binding to several surface receptors such as CD26, CXCR4, heparan sulfate proteoglycans (HSPG) or LDLR. Neurons are rarely infected, but they internalize Tat via their LDLR. Through its interaction with nuclear HATs, Tat is potentially able to control the acetylation-dependent cellular gene expression. Modulates the expression of many cellular genes involved in cell survival, proliferation or in coding for cytokines or cytokine receptors. Tat plays a role in T-cell and neurons apoptosis. Tat induced neurotoxicity and apoptosis probably contribute to neuroAIDS. Circulating Tat also acts as a chemokine-like and/or growth factor-like molecule that binds to specific receptors on the surface of the cells, affecting many cellular pathways. In the vascular system, Tat binds to ITGAV/ITGB3 and ITGA5/ITGB1 integrins dimers at the surface of endothelial cells and competes with bFGF for heparin-binding sites, leading to an excess of soluble bFGF. The sequence is that of Protein Tat from Pan troglodytes (Chimpanzee).